The chain runs to 406 residues: 2,3-bisphosphoglycerate-independent phosphoglycerate mutase (406 aa).

The segment at 156–183 is disordered; the sequence is NLSDKISDSDPHSEGKPPEPIRPLDPSA. Residues 160–174 are compositionally biased toward basic and acidic residues; sequence KISDSDPHSEGKPPE.

It belongs to the BPG-independent phosphoglycerate mutase family. A-PGAM subfamily.

The catalysed reaction is (2R)-2-phosphoglycerate = (2R)-3-phosphoglycerate. The protein operates within carbohydrate degradation; glycolysis; pyruvate from D-glyceraldehyde 3-phosphate: step 3/5. In terms of biological role, catalyzes the interconversion of 2-phosphoglycerate and 3-phosphoglycerate. The protein is 2,3-bisphosphoglycerate-independent phosphoglycerate mutase of Thermoplasma volcanium (strain ATCC 51530 / DSM 4299 / JCM 9571 / NBRC 15438 / GSS1).